The primary structure comprises 465 residues: Cytochrome P450 85A2 (465 aa).

A helical transmembrane segment spans residues 2 to 22; sequence GIMMMILGLLVIIVCLCTALL. Cys-415 contributes to the heme binding site. Residue Cys-462 is the site of S-farnesyl cysteine attachment. The Farnesylation CAAX motif signature appears at 462-465; it reads CSPY.

The protein belongs to the cytochrome P450 family. The cofactor is heme. In terms of processing, isoprenylated (farnesylated); this addition of a 15-carbon farnesyl isoprenoid to the carboxy terminus is required for endoplasmic reticulum localization and essential for the biosynthesis of brassinolide. Expressed in stems, hypocotyls, leaves, siliques, shoots, and roots, with a higher expression in apical shoots.

Its subcellular location is the membrane. It is found in the endoplasmic reticulum. The catalysed reaction is 6-deoxoteasterone + reduced [NADPH--hemoprotein reductase] + O2 = 6alpha-hydroxyteasterone + oxidized [NADPH--hemoprotein reductase] + H2O + H(+). It catalyses the reaction 6alpha-hydroxytyphasterol + reduced [NADPH--hemoprotein reductase] + O2 = teasterone + oxidized [NADPH--hemoprotein reductase] + 2 H2O + H(+). It carries out the reaction 3-dehydro-6-deoxoteasterone + reduced [NADPH--hemoprotein reductase] + O2 = 3-dehydro-6alpha-hydroxyteasterone + oxidized [NADPH--hemoprotein reductase] + H2O + H(+). The enzyme catalyses 3-dehydro-6alpha-hydroxyteasterone + reduced [NADPH--hemoprotein reductase] + O2 = 3-dehydroteasterone + oxidized [NADPH--hemoprotein reductase] + 2 H2O + H(+). The catalysed reaction is 6-deoxotyphasterol + reduced [NADPH--hemoprotein reductase] + O2 = 6alpha-hydroxytyphasterol + oxidized [NADPH--hemoprotein reductase] + H2O + H(+). It catalyses the reaction 6alpha-hydroxytyphasterol + reduced [NADPH--hemoprotein reductase] + O2 = typhasterol + oxidized [NADPH--hemoprotein reductase] + 2 H2O + H(+). It carries out the reaction 6-deoxocastasterone + reduced [NADPH--hemoprotein reductase] + O2 = 6alpha-hydroxycastasterone + oxidized [NADPH--hemoprotein reductase] + H2O + H(+). The enzyme catalyses 6alpha-hydroxycastasterone + reduced [NADPH--hemoprotein reductase] + O2 = castasterone + oxidized [NADPH--hemoprotein reductase] + 2 H2O + H(+). The catalysed reaction is 6-deoxo-28-norteasterone + 2 reduced [NADPH--hemoprotein reductase] + 2 O2 = 28-norteasterone + 2 oxidized [NADPH--hemoprotein reductase] + 3 H2O + 2 H(+). It catalyses the reaction 6-deoxo-28-norteasterone + reduced [NADPH--hemoprotein reductase] + O2 = 6alpha-hydroxy-28-norteasterone + oxidized [NADPH--hemoprotein reductase] + H2O + H(+). It carries out the reaction 6alpha-hydroxy-28-norteasterone + reduced [NADPH--hemoprotein reductase] + O2 = 28-norteasterone + oxidized [NADPH--hemoprotein reductase] + 2 H2O + H(+). The enzyme catalyses 6-deoxo-28-nortyphasterol + 2 reduced [NADPH--hemoprotein reductase] + 2 O2 = 28-nortyphasterol + 2 oxidized [NADPH--hemoprotein reductase] + 3 H2O + 2 H(+). The catalysed reaction is 6-deoxo-28-nortyphasterol + reduced [NADPH--hemoprotein reductase] + O2 = 6alpha-hydroxy-28-nortyphasterol + oxidized [NADPH--hemoprotein reductase] + H2O + H(+). It catalyses the reaction 6alpha-hydroxy-28-nortyphasterol + reduced [NADPH--hemoprotein reductase] + O2 = 28-nortyphasterol + oxidized [NADPH--hemoprotein reductase] + 2 H2O + H(+). It carries out the reaction 6-deoxo-28-norcastasterone + 2 reduced [NADPH--hemoprotein reductase] + 2 O2 = 28-norcastasterone + 2 oxidized [NADPH--hemoprotein reductase] + 3 H2O + 2 H(+). The enzyme catalyses 6-deoxo-28-norcastasterone + reduced [NADPH--hemoprotein reductase] + O2 = 6alpha-hydroxy-28-norcastasterone + oxidized [NADPH--hemoprotein reductase] + H2O + H(+). The catalysed reaction is 6alpha-hydroxy-28-norcastasterone + reduced [NADPH--hemoprotein reductase] + O2 = 28-norcastasterone + oxidized [NADPH--hemoprotein reductase] + 2 H2O + H(+). It catalyses the reaction 3-dehydro-6-deoxo-28-norteasterone + 2 reduced [NADPH--hemoprotein reductase] + 2 O2 = 6-dehydro-28-norteasterone + 2 oxidized [NADPH--hemoprotein reductase] + 3 H2O + 2 H(+). It carries out the reaction 3-dehydro-6-deoxo-28-norteasterone + reduced [NADPH--hemoprotein reductase] + O2 = 3-dehydro-6alpha-hydroxy-28-norteasterone + oxidized [NADPH--hemoprotein reductase] + H2O + H(+). The enzyme catalyses 3-dehydro-6alpha-hydroxy-28-norteasterone + reduced [NADPH--hemoprotein reductase] + O2 = 6-dehydro-28-norteasterone + oxidized [NADPH--hemoprotein reductase] + 2 H2O + H(+). The catalysed reaction is teasterone + reduced [NADPH--hemoprotein reductase] + O2 = 7-oxateasterone + oxidized [NADPH--hemoprotein reductase] + H2O + H(+). It catalyses the reaction castasterone + reduced [NADPH--hemoprotein reductase] + O2 = brassinolide + oxidized [NADPH--hemoprotein reductase] + H2O + H(+). It carries out the reaction typhasterol + reduced [NADPH--hemoprotein reductase] + O2 = 7-oxatyphasterol + oxidized [NADPH--hemoprotein reductase] + H2O + H(+). The enzyme catalyses 6-deoxocastasterone + 2 reduced [NADPH--hemoprotein reductase] + 2 O2 = castasterone + 2 oxidized [NADPH--hemoprotein reductase] + 3 H2O + 2 H(+). The catalysed reaction is 6-deoxoteasterone + 2 reduced [NADPH--hemoprotein reductase] + 2 O2 = teasterone + 2 oxidized [NADPH--hemoprotein reductase] + 3 H2O + 2 H(+). It catalyses the reaction 6-deoxotyphasterol + 2 reduced [NADPH--hemoprotein reductase] + 2 O2 = typhasterol + 2 oxidized [NADPH--hemoprotein reductase] + 3 H2O + 2 H(+). It carries out the reaction 3-dehydro-6-deoxoteasterone + 2 reduced [NADPH--hemoprotein reductase] + 2 O2 = 3-dehydroteasterone + 2 oxidized [NADPH--hemoprotein reductase] + 3 H2O + 2 H(+). It participates in plant hormone biosynthesis; brassinosteroid biosynthesis. Functionally, mediates Baeyer-Villiger oxidation and catalyzes the C6-oxidation step and lactonization in brassinosteroids biosynthesis. Converts 6-deoxocastasterone (6-deoxoCS) to castasterone (CS), and castasterone to brassinolide (BL). May also convert 6-deoxoteasterone (6-deoxoTE) to teasterone (TE), 3-dehydro-6-deoxoteasterone (6-deoxo3DT, 6-deoxo-3-DHT) to 3-dehydroteasterone (3DT, 3-DHT), and 6-deoxotyphasterol (6-deoxoTY) to typhasterol (TY). Also seems to be able to convert teasterone (TE) and typhasterol (TY) to 7-oxateasterone (7-OXTE) and 7-oxatyphasterol (7-OXTY), respectively. Catalyzes the conversion of 6-deoxo-28-norteasterone (6-deoxo-28-norTE) to 28-norteasterone (28-norTE), 6-deoxo-28-nordeoxoteasterone (6-deoxo-28-nor-3-DHT) to 28-nordeoxoteasterone (28-nor-3-DHT), 6-deoxo-28-nortyphasterol (6-deoxo-28-norTY) to 28-nortyphasterol (28-norTY) and 6-deoxo-28-norcastasterone (6-deoxo-28-norCS) to 28-norcastasterone (28-norCS). Involved in a negative regulation of responses to abscisic acid (ABA) and drought tolerance. This chain is Cytochrome P450 85A2 (CYP85A2), found in Arabidopsis thaliana (Mouse-ear cress).